Here is a 143-residue protein sequence, read N- to C-terminus: Actin-depolymerizing factor 5 (143 aa).

Positions 11 to 143 constitute an ADF-H domain; the sequence is GMRVTDECTS…GFDIIQDRAK (133 aa).

Belongs to the actin-binding proteins ADF family. Expressed exclusively in root tip meristem.

The protein localises to the cytoplasm. The protein resides in the cytoskeleton. Functionally, actin-depolymerizing protein. Severs actin filaments (F-actin) and binds to actin monomers. This is Actin-depolymerizing factor 5 (ADF5) from Arabidopsis thaliana (Mouse-ear cress).